The primary structure comprises 124 residues: Putative iron-sulfur cluster insertion protein ErpA (124 aa).

Iron-sulfur cluster contacts are provided by C52, C116, and C118.

The protein belongs to the HesB/IscA family. Homodimer. Iron-sulfur cluster serves as cofactor.

Its function is as follows. Required for insertion of 4Fe-4S clusters. This chain is Putative iron-sulfur cluster insertion protein ErpA, found in Ralstonia nicotianae (strain ATCC BAA-1114 / GMI1000) (Ralstonia solanacearum).